The primary structure comprises 185 residues: Capsid protein (185 aa).

The tract at residues 135–185 is disordered; sequence PNAPILSTLPETTVVRRRDRGRSPRRRTPSPRRRRSQSPRRRRSQSRESQC. A compositionally biased stretch (basic residues) spans 149 to 178; sequence VRRRDRGRSPRRRTPSPRRRRSQSPRRRRS. 3 positions are modified to phosphoserine; by host: Ser157, Ser164, and Ser172. Residues 157–163 form a 1; half-length repeat; the sequence is SPRRRTP. Residues 157-179 are 3 X 8 AA repeats of S-P-R-R-R-[PR]-S-Q; the sequence is SPRRRTPSPRRRRSQSPRRRRSQ. The Bipartite nuclear localization signal signature appears at 160–177; it reads RRTPSPRRRRSQSPRRRR. Tandem repeats lie at residues 164 to 171 and 172 to 179. The segment at 179–185 is RNA binding; that stretch reads QSRESQC.

The protein belongs to the orthohepadnavirus core antigen family. As to quaternary structure, homodimerizes, then multimerizes. Interacts with cytosol exposed regions of viral L glycoprotein present in the reticulum-to-Golgi compartment. Interacts with human FLNB. Phosphorylated form interacts with host importin alpha; this interaction depends on the exposure of the NLS, which itself depends upon genome maturation and/or phosphorylation of the capsid protein. Interacts with host NUP153. Phosphorylated by host SRPK1, SRPK2, and maybe protein kinase C or GAPDH. Phosphorylation is critical for pregenomic RNA packaging. Protein kinase C phosphorylation is stimulated by HBx protein and may play a role in transport of the viral genome to the nucleus at the late step during the viral replication cycle.

It localises to the virion. The protein resides in the host cytoplasm. Functionally, self assembles to form an icosahedral capsid. Most capsids appear to be large particles with an icosahedral symmetry of T=4 and consist of 240 copies of capsid protein, though a fraction forms smaller T=3 particles consisting of 180 capsid proteins. Entering capsids are transported along microtubules to the nucleus. Phosphorylation of the capsid is thought to induce exposure of nuclear localization signal in the C-terminal portion of the capsid protein that allows binding to the nuclear pore complex via the importin (karyopherin-) alpha and beta. Capsids are imported in intact form through the nuclear pore into the nuclear basket, where it probably binds NUP153. Only capsids that contain the mature viral genome can release the viral DNA and capsid protein into the nucleoplasm. Immature capsids get stuck in the basket. Capsids encapsulate the pre-genomic RNA and the P protein. Pre-genomic RNA is reverse-transcribed into DNA while the capsid is still in the cytoplasm. The capsid can then either be directed to the nucleus, providing more genomes for transcription, or bud through the endoplasmic reticulum to provide new virions. The chain is Capsid protein from Hepatitis B virus genotype A3 (isolate Cameroon/CMR711/1994) (HBV-A).